A 269-amino-acid chain; its full sequence is HTH-type transcriptional activator ArnR (269 aa).

Over 1–218 (MTKSLFDVLK…LLRLTNSYTL (218 aa)) the chain is Cytoplasmic. Positions 39–62 (TTEISQTINTSRKSIIDAIRKLVD) form a DNA-binding region, H-T-H motif. A helical transmembrane segment spans residues 219-239 (EMANVKVMGFILISLPLLMYF). Residues 240 to 242 (RDQ) are Extracellular-facing. Residues 243–263 (LGLIELPWLYAVIFLALLSVF) form a helical membrane-spanning segment. At 264–269 (AQILSR) the chain is on the cytoplasmic side.

The protein localises to the cell membrane. Its function is as follows. Involved in regulation of archaellar gene expression. Activates flaB transcription upon nutrient starvation by acting on the flaB promoter. This is HTH-type transcriptional activator ArnR from Sulfolobus acidocaldarius (strain ATCC 33909 / DSM 639 / JCM 8929 / NBRC 15157 / NCIMB 11770).